A 181-amino-acid chain; its full sequence is Methanesulfonate monooxygenase hydroxylase subunit beta (181 aa).

This sequence belongs to the bacterial ring-hydroxylating dioxygenase beta subunit family. As to quaternary structure, the MSA monooxygenase system consists of 4 proteins: the 2 subunits of the hydroxylase component (MsmA and MsmB), a ferredoxin (MsmC) and a ferredoxin reductase (MsmD). The hydroxylase component consists of a 3 alpha (MsmA) and 3 beta (MsmB) subunits.

It localises to the cytoplasm. The catalysed reaction is methanesulfonate + NADH + O2 = sulfite + formaldehyde + NAD(+) + H2O. With respect to regulation, MSAMO is inhibited by metal chelators (such as bathophenanthroline, bathocuprione, neocuprione, alpha-alpha-dipyridil and sodium EDTA) and by sodium azide, sodium arsenate and potassium cyanide. Its function is as follows. Methanesulfonate monooxygenase (MSAMO) mediates the primary degradation of methanesulfonic acid (MSA) to produce formaldehyd and inorganic sulfite by initial hydroxylation of the carbon atom prior to spontaneous cleavage of the unstable hydroxymethanesulfonic acid. MSAMO has a restricted substrate range that includes only the short-chain aliphatic sulfonates (methane- to butanesulfonate) and excludes all larger molecules, such as arylsulfonates and aromatic sulfonates. All MSAMO components are required for enzyme activity. The polypeptide is Methanesulfonate monooxygenase hydroxylase subunit beta (Methylosulfonomonas methylovora).